The chain runs to 95 residues: Class II hydrophobin 3 (95 aa).

A signal peptide spans 1 to 16 (MKLLAVAALLAGAAIA). 4 disulfide bridges follow: Cys28-Cys77, Cys38-Cys68, Cys39-Cys51, and Cys78-Cys89.

Belongs to the cerato-ulmin hydrophobin family.

Its subcellular location is the secreted. The protein resides in the cell wall. Its function is as follows. Aerial growth, conidiation, and dispersal of filamentous fungi in the environment rely upon a capability of their secreting small amphipathic proteins called hydrophobins (HPBs) with low sequence identity. Class I can self-assemble into an outermost layer of rodlet bundles on aerial cell surfaces, conferring cellular hydrophobicity that supports fungal growth, development and dispersal; whereas Class II form highly ordered films at water-air interfaces through intermolecular interactions but contribute nothing to the rodlet structure. Hyd3 plays a neglectable role in hyphal growth and asexual development and does not seem involved in cellular hydrophobicity, conidial adhesion, stress tolerance nor insect pathogenicity. This is Class II hydrophobin 3 from Metarhizium robertsii (strain ARSEF 23 / ATCC MYA-3075) (Metarhizium anisopliae (strain ARSEF 23)).